Consider the following 86-residue polypeptide: MeuNaTxbeta-1 (86 aa).

The signal sequence occupies residues 1 to 20; sequence MMKIIIFLIVSSLVLIGVKT. Positions 21–83 constitute an LCN-type CS-alpha/beta domain; it reads DNGYLLDKYT…LWHYETNKCN (63 aa). 4 disulfide bridges follow: C32–C82, C36–C57, C43–C64, and C47–C66.

Expressed by the venom gland.

The protein localises to the secreted. Functionally, inhibits sodium channels (Nav). Also moderately inhibits human calcium-activated potassium channel KCa1.1/KCNMA1/BK (41.9% decrease at 2 uM toxin concentration). Shows moderate antimicrobial activity against both Gram-positive and -negative bacteria. The sequence is that of MeuNaTxbeta-1 from Mesobuthus eupeus (Lesser Asian scorpion).